The sequence spans 110 residues: UPF0060 membrane protein RPA3838 (110 aa).

4 consecutive transmembrane segments (helical) span residues 4–24 (LLTF…FWAW), 31–51 (PLWL…LTLA), 59–79 (AYAA…WAIE), and 85–105 (QWDV…LFGP).

It belongs to the UPF0060 family.

The protein resides in the cell inner membrane. In Rhodopseudomonas palustris (strain ATCC BAA-98 / CGA009), this protein is UPF0060 membrane protein RPA3838.